We begin with the raw amino-acid sequence, 104 residues long: Large ribosomal subunit protein uL24 (104 aa).

Belongs to the universal ribosomal protein uL24 family. As to quaternary structure, part of the 50S ribosomal subunit.

One of two assembly initiator proteins, it binds directly to the 5'-end of the 23S rRNA, where it nucleates assembly of the 50S subunit. Functionally, one of the proteins that surrounds the polypeptide exit tunnel on the outside of the subunit. In Alteromonas mediterranea (strain DSM 17117 / CIP 110805 / LMG 28347 / Deep ecotype), this protein is Large ribosomal subunit protein uL24.